Consider the following 163-residue polypeptide: Nuclear cap-binding protein subunit 2 (163 aa).

Residues Tyr18, Tyr41, 110–114, 121–125, and 131–132 each bind mRNA; these read RVDWD, RQYGR, and QV. Residues 38-116 enclose the RRM domain; the sequence is STLYVGNLSF…RIVRVDWDAG (79 aa).

It belongs to the RRM NCBP2 family. In terms of assembly, component of the nuclear cap-binding complex (CBC), a heterodimer composed of Cbp80 and Cbp20 that interacts with m7GpppG-capped RNA.

It is found in the nucleus. Its function is as follows. Component of the cap-binding complex (CBC), which binds co-transcriptionally to the 5' cap of pre-mRNAs and is involved in various processes such as pre-mRNA splicing and RNA-mediated gene silencing (RNAi). The CBC complex is involved in miRNA-mediated RNA interference and is required for primary microRNAs (miRNAs) processing. Also involved in innate immunity via the short interfering RNAs (siRNAs) processing machinery by restricting the viral RNA production. In the CBC complex, Cbp20 recognizes and binds capped RNAs (m7GpppG-capped RNA) but requires Cbp80 to stabilize the movement of its N-terminal loop and lock the CBC into a high affinity cap-binding state with the cap structure. In Anopheles gambiae (African malaria mosquito), this protein is Nuclear cap-binding protein subunit 2 (Cbp20).